The primary structure comprises 321 residues: Tyrosine recombinase XerC (321 aa).

Residues 16 to 107 enclose the Core-binding (CB) domain; that stretch reads SDIGQQIVRW…GLRSFARFLE (92 aa). Residues 128 to 315 enclose the Tyr recombinase domain; the sequence is SVPKPIHMSA…DSERLLDVYR (188 aa). Active-site residues include R173, K199, H267, R270, and H293. Y302 acts as the O-(3'-phospho-DNA)-tyrosine intermediate in catalysis.

This sequence belongs to the 'phage' integrase family. XerC subfamily. Forms a cyclic heterotetrameric complex composed of two molecules of XerC and two molecules of XerD.

Its subcellular location is the cytoplasm. In terms of biological role, site-specific tyrosine recombinase, which acts by catalyzing the cutting and rejoining of the recombining DNA molecules. The XerC-XerD complex is essential to convert dimers of the bacterial chromosome into monomers to permit their segregation at cell division. It also contributes to the segregational stability of plasmids. The polypeptide is Tyrosine recombinase XerC (Nitrobacter winogradskyi (strain ATCC 25391 / DSM 10237 / CIP 104748 / NCIMB 11846 / Nb-255)).